The primary structure comprises 266 residues: Hydroxyethylthiazole kinase (266 aa).

Met-45 serves as a coordination point for substrate. Residues Arg-120 and Thr-165 each contribute to the ATP site. Position 192 (Ala-192) interacts with substrate.

The protein belongs to the Thz kinase family. Mg(2+) is required as a cofactor.

The catalysed reaction is 5-(2-hydroxyethyl)-4-methylthiazole + ATP = 4-methyl-5-(2-phosphooxyethyl)-thiazole + ADP + H(+). The protein operates within cofactor biosynthesis; thiamine diphosphate biosynthesis; 4-methyl-5-(2-phosphoethyl)-thiazole from 5-(2-hydroxyethyl)-4-methylthiazole: step 1/1. In terms of biological role, catalyzes the phosphorylation of the hydroxyl group of 4-methyl-5-beta-hydroxyethylthiazole (THZ). In Psychrobacter sp. (strain PRwf-1), this protein is Hydroxyethylthiazole kinase.